The chain runs to 193 residues: Flagellar transcriptional regulator FlhC (193 aa).

Residues Cys137, Cys140, Cys158, and Cys161 each contribute to the Zn(2+) site.

This sequence belongs to the FlhC family. Heterohexamer composed of two FlhC and four FlhD subunits. Each FlhC binds a FlhD dimer, forming a heterotrimer, and a hexamer assembles by dimerization of two heterotrimers. Zn(2+) serves as cofactor.

The protein resides in the cytoplasm. In terms of biological role, functions in complex with FlhD as a master transcriptional regulator that regulates transcription of several flagellar and non-flagellar operons by binding to their promoter region. Activates expression of class 2 flagellar genes, including fliA, which is a flagellum-specific sigma factor that turns on the class 3 genes. Also regulates genes whose products function in a variety of physiological pathways. This chain is Flagellar transcriptional regulator FlhC, found in Pectobacterium carotovorum (Erwinia carotovora).